Consider the following 667-residue polypeptide: Probable potassium transport system protein Kup (667 aa).

A run of 12 helical transmembrane segments spans residues 16–36, 58–78, 101–121, 146–166, 167–187, 221–241, 253–273, 294–314, 343–363, 373–393, 399–419, and 431–451; these read GFII…LYTM, VSLI…LIAL, WLII…ALTP, TNVI…QRFG, TGVI…VLGI, IFIL…YSDL, WPFV…WILA, VYLV…LISG, LYIP…VLYF, YGLA…YYLI, PLLA…FFLA, and VVVL…GTVI.

Belongs to the HAK/KUP transporter (TC 2.A.72) family.

It is found in the cell membrane. The catalysed reaction is K(+)(in) + H(+)(in) = K(+)(out) + H(+)(out). In terms of biological role, transport of potassium into the cell. Likely operates as a K(+):H(+) symporter. This chain is Probable potassium transport system protein Kup, found in Streptococcus equi subsp. zooepidemicus (strain MGCS10565).